The following is a 663-amino-acid chain: tRNA (guanine(26)-N(2))-dimethyltransferase (663 aa).

The transit peptide at 1–16 directs the protein to the mitochondrion; sequence MSLARTILWLSRPLRP. A Trm1 methyltransferase domain is found at 56-498; sequence ATVTEGAAKI…APPEALWDIM (443 aa). An S-adenosyl-L-methionine-binding site is contributed by arginine 83. Serine 121 carries the post-translational modification Phosphoserine. Residues arginine 165 and aspartate 183 each coordinate S-adenosyl-L-methionine. Zn(2+) contacts are provided by cysteine 347, cysteine 350, cysteine 383, and cysteine 386. Serine 516 carries the phosphoserine modification. Residues 534–574 form a disordered region; the sequence is IREDANPSSRQRGLKRFQANPEANWGPRPRARPGGKAASED. Positions 540–572 match the Nuclear localization signal motif; it reads PSSRQRGLKRFQANPEANWGPRPRARPGGKAAS. A C3H1-type zinc finger spans residues 599-626; the sequence is RLKTFPCKRFKEGTCQLGDQCCYSHSPA. Serine 624 carries the phosphoserine modification. The tract at residues 632–663 is disordered; it reads GDIPIEECPETTTKISPGPKAAAGGIPGPGVD.

The protein belongs to the class I-like SAM-binding methyltransferase superfamily. Trm1 family.

It localises to the mitochondrion. The protein resides in the nucleus. Its subcellular location is the cytoplasm. The catalysed reaction is guanosine(26) in tRNA + 2 S-adenosyl-L-methionine = N(2)-dimethylguanosine(26) in tRNA + 2 S-adenosyl-L-homocysteine + 2 H(+). In terms of biological role, dimethylates a single guanine residue at position 26 of most nuclear- and mitochondrial-encoded tRNAs using S-adenosyl-L-methionine as donor of the methyl groups. tRNA guanine(26)-dimethylation is required for redox homeostasis and ensure proper cellular proliferation and oxidative stress survival. This is tRNA (guanine(26)-N(2))-dimethyltransferase from Mus musculus (Mouse).